The chain runs to 61 residues: Type IV secretion system protein PtlI homolog (61 aa).

The first 25 residues, 1-25, serve as a signal peptide directing secretion; the sequence is MIHAHSNARLLRWAILAIAPVTLGA. The disordered stretch occupies residues 37–61; sequence PDGKPLIPINTAAPEQGSSCQTRAP. Residues 52 to 61 are compositionally biased toward polar residues; it reads QGSSCQTRAP.

The polypeptide is Type IV secretion system protein PtlI homolog (ptlI) (Bordetella parapertussis (strain 12822 / ATCC BAA-587 / NCTC 13253)).